The following is a 76-amino-acid chain: ATP synthase peripheral stalk subunit F6, mitochondrial (76 aa).

An N6-acetyllysine mark is found at Lys-9, Lys-14, and Lys-47. 2 positions are modified to N6-acetyllysine; alternate: Lys-52 and Lys-67. Residues Lys-52 and Lys-67 each carry the N6-succinyllysine; alternate modification. The residue at position 73 (Lys-73) is an N6-acetyllysine. The residue at position 76 (Ser-76) is a Phosphoserine.

Belongs to the eukaryotic ATPase subunit F6 family. As to quaternary structure, component of the ATP synthase complex composed at least of ATP5F1A/subunit alpha, ATP5F1B/subunit beta, ATP5MC1/subunit c (homooctomer), MT-ATP6/subunit a, MT-ATP8/subunit 8, ATP5ME/subunit e, ATP5MF/subunit f, ATP5MG/subunit g, ATP5MK/subunit k, ATP5MJ/subunit j, ATP5F1C/subunit gamma, ATP5F1D/subunit delta, ATP5F1E/subunit epsilon, ATP5PF/subunit F6, ATP5PB/subunit b, ATP5PD/subunit d, ATP5PO/subunit OSCP. ATP synthase complex consists of a soluble F(1) head domain (subunits alpha(3) and beta(3)) - the catalytic core - and a membrane F(0) domain - the membrane proton channel (subunits c, a, 8, e, f, g, k and j). These two domains are linked by a central stalk (subunits gamma, delta, and epsilon) rotating inside the F1 region and a stationary peripheral stalk (subunits F6, b, d, and OSCP).

It is found in the mitochondrion. Its subcellular location is the mitochondrion inner membrane. Its function is as follows. Subunit F6, of the mitochondrial membrane ATP synthase complex (F(1)F(0) ATP synthase or Complex V) that produces ATP from ADP in the presence of a proton gradient across the membrane which is generated by electron transport complexes of the respiratory chain. ATP synthase complex consist of a soluble F(1) head domain - the catalytic core - and a membrane F(1) domain - the membrane proton channel. These two domains are linked by a central stalk rotating inside the F(1) region and a stationary peripheral stalk. During catalysis, ATP synthesis in the catalytic domain of F(1) is coupled via a rotary mechanism of the central stalk subunits to proton translocation. In vivo, can only synthesize ATP although its ATP hydrolase activity can be activated artificially in vitro. Part of the complex F(0) domain. Part of the complex F(0) domain and the peripheric stalk, which acts as a stator to hold the catalytic alpha(3)beta(3) subcomplex and subunit a/ATP6 static relative to the rotary elements. The polypeptide is ATP synthase peripheral stalk subunit F6, mitochondrial (Sus scrofa (Pig)).